The chain runs to 382 residues: MCLPLILTIKIINIIINMFNKTNKKINILGKTREELYDFFIKIGEEKFRAEQIMKWIYKRYCDDVSLMTDFSKNLKNKLKNIIKIDHLDIESENISQDGTIKWVLKINDQNIETVYIPEINRATLCISSQIGCALNCKFCATSYQGFNRNLNSYEIISQIWYAMKIINDRNNFKLKKITNIVMMGMGEPLLNLKNLVPAIKIILDNYGFGLSKRRITISTAGISPVIKKLGKLIDVKLAISLHAPNDIIRNKIMPINKKYNIKSILLSAKKYISTSKANKGKISIEYIMLNEINDKTEHAYQLINCLKNIPCKINLIPWNPFPYVKYKCSNFNKINNFYKILIKHGITTTIRKQRGIDIKAACGQLSGNVINRINKRNIINF.

E113 acts as the Proton acceptor in catalysis. Positions E119–D358 constitute a Radical SAM core domain. A disulfide bond links C126 and C363. Residues C133, C137, and C140 each coordinate [4Fe-4S] cluster. Residues G187–E188, S219, S241–H243, and N320 each bind S-adenosyl-L-methionine. Residue C363 is the S-methylcysteine intermediate of the active site.

It belongs to the radical SAM superfamily. RlmN family. It depends on [4Fe-4S] cluster as a cofactor.

Its subcellular location is the cytoplasm. The enzyme catalyses adenosine(2503) in 23S rRNA + 2 reduced [2Fe-2S]-[ferredoxin] + 2 S-adenosyl-L-methionine = 2-methyladenosine(2503) in 23S rRNA + 5'-deoxyadenosine + L-methionine + 2 oxidized [2Fe-2S]-[ferredoxin] + S-adenosyl-L-homocysteine. It carries out the reaction adenosine(37) in tRNA + 2 reduced [2Fe-2S]-[ferredoxin] + 2 S-adenosyl-L-methionine = 2-methyladenosine(37) in tRNA + 5'-deoxyadenosine + L-methionine + 2 oxidized [2Fe-2S]-[ferredoxin] + S-adenosyl-L-homocysteine. In terms of biological role, specifically methylates position 2 of adenine 2503 in 23S rRNA and position 2 of adenine 37 in tRNAs. m2A2503 modification seems to play a crucial role in the proofreading step occurring at the peptidyl transferase center and thus would serve to optimize ribosomal fidelity. The chain is Dual-specificity RNA methyltransferase RlmN from Wigglesworthia glossinidia brevipalpis.